Here is a 369-residue protein sequence, read N- to C-terminus: Arsenite methyltransferase (369 aa).

Position 46 is a phosphoserine (S46).

The protein belongs to the methyltransferase superfamily. Arsenite methyltransferase family.

Its subcellular location is the cytoplasm. The protein resides in the cytosol. The catalysed reaction is arsenic triglutathione + [thioredoxin]-dithiol + S-adenosyl-L-methionine + 2 H2O = methylarsonous acid + [thioredoxin]-disulfide + 3 glutathione + S-adenosyl-L-homocysteine + H(+). It carries out the reaction arsenic triglutathione + 2 [thioredoxin]-dithiol + 2 S-adenosyl-L-methionine + H2O = dimethylarsinous acid + 2 [thioredoxin]-disulfide + 3 glutathione + 2 S-adenosyl-L-homocysteine + 2 H(+). The enzyme catalyses arsenic triglutathione + 3 [thioredoxin]-dithiol + 3 S-adenosyl-L-methionine = trimethylarsine + 3 [thioredoxin]-disulfide + 3 glutathione + 3 S-adenosyl-L-homocysteine + 3 H(+). Functionally, catalyzes the transfer of a methyl group from AdoMet to trivalent arsenicals producing methylated and dimethylated arsenicals. It methylates arsenite to form methylarsonate, Me-AsO(3)H(2), which is reduced by methylarsonate reductase to methylarsonite, Me-As(OH)2. Methylarsonite is also a substrate and it is converted into the much less toxic compound dimethylarsinate (cacodylate), Me(2)As(O)-OH. The sequence is that of Arsenite methyltransferase (As3mt) from Rattus norvegicus (Rat).